Consider the following 226-residue polypeptide: MATTVKDTMNVDINAIKKGEIRMGTTITALRYKDGVILAADSRTTMGAYIANRVTDKLTQLTDNIWCCRSGSAADTQTVADLLKYYLSMYRIQFGHDPSVHTAATLASEMCYQNKNMLSAGLIVAGYDEKTGGDVYSIPLGGSLHKQPLAIGGSGSAFIYGFCDANFRENMTQEEAVEFLKNAVALAMERDGSSGGTIRMVILNKDGMERKFFAIDTANPIPVFTH.

The propeptide at 1 to 24 (MATTVKDTMNVDINAIKKGEIRMG) is removed in mature form. Thr-25 (nucleophile) is an active-site residue.

This sequence belongs to the peptidase T1B family. The 26S proteasome consists of a 20S proteasome core and two 19S regulatory subunits. The 20S proteasome core is composed of 28 subunits that are arranged in four stacked rings, resulting in a barrel-shaped structure. The two end rings are each formed by seven alpha subunits, and the two central rings are each formed by seven beta subunits. The catalytic chamber with the active sites is on the inside of the barrel.

It localises to the cytoplasm. The protein resides in the nucleus. The enzyme catalyses Cleavage of peptide bonds with very broad specificity.. Functionally, the proteasome is a multicatalytic proteinase complex which is characterized by its ability to cleave peptides with Arg, Phe, Tyr, Leu, and Glu adjacent to the leaving group at neutral or slightly basic pH. The proteasome has an ATP-dependent proteolytic activity. The chain is Probable proteasome subunit beta type-1 (pre3) from Schizosaccharomyces pombe (strain 972 / ATCC 24843) (Fission yeast).